Reading from the N-terminus, the 497-residue chain is Serine/threonine-protein kinase cst-1 (497 aa).

The interval 1 to 27 is disordered; that stretch reads MPPSTDSSRRNSEEGSSDGFKLDSSAL. The Protein kinase domain maps to 35 to 286; the sequence is FDIVGKLGEG…ALRLCEHTFI (252 aa). Residues 41–49 and Lys64 each bind ATP; that span reads LGEGSYGSV. Asp154 (proton acceptor) is an active-site residue. A disordered region spans residues 367–416; that stretch reads KSAYIPGSSKNGNSPRVQPPGHTASASDPSKNQPFAQDGTGPNFQLGTSE. The span at 390–416 shows a compositional bias: polar residues; the sequence is ASASDPSKNQPFAQDGTGPNFQLGTSE. An SARAH domain is found at 446–493; it reads FEFLRNITLDELIRRKESLDSEMEEEIRELQRRYKTKRQPILDVIEIK. The stretch at 450–486 forms a coiled coil; the sequence is RNITLDELIRRKESLDSEMEEEIRELQRRYKTKRQPI.

This sequence belongs to the protein kinase superfamily. STE Ser/Thr protein kinase family. STE20 subfamily. In terms of assembly, interacts with rsf-1 (via SARAH domain); the interaction is required for the phosphorylation of cst-1. The cofactor is Mg(2+). Post-translationally, proteolytically cleaved by caspase-3 during apoptosis which results in kinase activation. In terms of processing, phosphorylated. In terms of tissue distribution, widely expressed in epidermal cells.

It carries out the reaction L-seryl-[protein] + ATP = O-phospho-L-seryl-[protein] + ADP + H(+). It catalyses the reaction L-threonyl-[protein] + ATP = O-phospho-L-threonyl-[protein] + ADP + H(+). Its function is as follows. Serine/threonine-protein kinase which extends lifespan and delays tissue aging, probably by activating daf-16. This is Serine/threonine-protein kinase cst-1 from Caenorhabditis elegans.